The following is a 513-amino-acid chain: Ribonuclease Y (513 aa).

Residues 3–23 (IGTLLLFTFLGLVAGATAVWL) form a helical membrane-spanning segment. Residues 77 to 96 (LQSVESKLKSREQTLNQRQE) form a disordered region. Over residues 82–96 (SKLKSREQTLNQRQE) the composition is skewed to basic and acidic residues. The 61-residue stretch at 203-263 (SVTVFHIESD…VRREIARLAL (61 aa)) folds into the KH domain. The HD domain maps to 329–422 (LLQHSRETAN…VQVCDAISGA (94 aa)).

This sequence belongs to the RNase Y family.

The protein localises to the cell membrane. Its function is as follows. Endoribonuclease that initiates mRNA decay. This is Ribonuclease Y from Porphyromonas gingivalis (strain ATCC BAA-308 / W83).